Here is a 121-residue protein sequence, read N- to C-terminus: Large ribosomal subunit protein uL18 (121 aa).

It belongs to the universal ribosomal protein uL18 family. As to quaternary structure, part of the 50S ribosomal subunit; part of the 5S rRNA/L5/L18/L25 subcomplex. Contacts the 5S and 23S rRNAs.

Functionally, this is one of the proteins that bind and probably mediate the attachment of the 5S RNA into the large ribosomal subunit, where it forms part of the central protuberance. The chain is Large ribosomal subunit protein uL18 from Burkholderia multivorans (strain ATCC 17616 / 249).